A 158-amino-acid polypeptide reads, in one-letter code: Ribosome maturation factor RimP (158 aa).

It belongs to the RimP family.

The protein resides in the cytoplasm. Required for maturation of 30S ribosomal subunits. This Leuconostoc citreum (strain KM20) protein is Ribosome maturation factor RimP.